A 334-amino-acid chain; its full sequence is Cytoskeleton protein RodZ (334 aa).

Over 1-111 (MNTEATHDQN…LGKRRKKRDG (111 aa)) the chain is Cytoplasmic. Residues 19–71 (LRNAREQLGLSQQAVAERLCLKVSTVRDIEEDKAPSDLASTFLRGYIRSYARL) form the HTH cro/C1-type domain. The segment at residues 30 to 49 (QQAVAERLCLKVSTVRDIEE) is a DNA-binding region (H-T-H motif). The helical; Signal-anchor for type II membrane protein transmembrane segment at 112 to 132 (WLMSFTWLVLFVVVGLTGAWW) threads the bilayer. Over 133–334 (WQNHKAQQEE…TLNAEPTPAQ (202 aa)) the chain is Periplasmic. Residues 155-241 (NADKDSGQSV…PSALPTSQAG (87 aa)) are disordered. Residues 161–175 (GQSVPLDTGAVTSQD) are compositionally biased toward polar residues. 2 stretches are compositionally biased toward low complexity: residues 176–211 (TTPAQTAPAPATPVDSTAATQTPAPTAAATQNTVVA) and 219–241 (TAATSAAPAATETPSALPTSQAG).

This sequence belongs to the RodZ family.

It is found in the cell inner membrane. Cytoskeletal protein that is involved in cell-shape control through regulation of the length of the long axis. In Salmonella dublin (strain CT_02021853), this protein is Cytoskeleton protein RodZ.